A 197-amino-acid polypeptide reads, in one-letter code: ATP-dependent Clp protease proteolytic subunit (197 aa).

The Nucleophile role is filled by serine 102. The active site involves histidine 127.

It belongs to the peptidase S14 family. Fourteen ClpP subunits assemble into 2 heptameric rings which stack back to back to give a disk-like structure with a central cavity, resembling the structure of eukaryotic proteasomes.

It localises to the cytoplasm. The enzyme catalyses Hydrolysis of proteins to small peptides in the presence of ATP and magnesium. alpha-casein is the usual test substrate. In the absence of ATP, only oligopeptides shorter than five residues are hydrolyzed (such as succinyl-Leu-Tyr-|-NHMec, and Leu-Tyr-Leu-|-Tyr-Trp, in which cleavage of the -Tyr-|-Leu- and -Tyr-|-Trp bonds also occurs).. Functionally, cleaves peptides in various proteins in a process that requires ATP hydrolysis. Has a chymotrypsin-like activity. Plays a major role in the degradation of misfolded proteins. The protein is ATP-dependent Clp protease proteolytic subunit of Borreliella afzelii (strain PKo) (Borrelia afzelii).